Here is a 138-residue protein sequence, read N- to C-terminus: Dehydratase iacD (138 aa).

Residues 18 to 113 (GVSEEDFIEW…LKDQDVWMDN (96 aa)) form the EthD domain.

This sequence belongs to the tpcK family.

The protein operates within secondary metabolite biosynthesis. In terms of biological role, dehydratase; part of the gene cluster that mediates the biosynthesis of iso-A82775C, a enylepoxycyclohexane and biosynthetic precursor of the chloropestolide anticancer natural products. Within the cluster, the prenyltransferase iacE prenylates siccayne to generate pestalodiol E, using dimethylallyl diphosphate (DMAPP) as cosubstrate. The probable oxidoreductase iacF is then involved in the epoxidation of pestalodiol F to pestalodiol F, which is further converted to pestalofone A by the short-chain dehydrogenase/reductase iacG. Iso-A82775C is subsequently generated from pestalofone A by the short-chain dehydrogenase/reductase iacC. Iso-A82775C is further condensed with maldoxin via a Diels-Alder reaction to produce the anticancer natural products chloropestolides A to E. This Pestalotiopsis fici (strain W106-1 / CGMCC3.15140) protein is Dehydratase iacD.